Reading from the N-terminus, the 128-residue chain is Small ribosomal subunit protein uS9 (128 aa).

Basic and acidic residues predominate over residues 97–113 (RSEGFMTRDPRSVERKK). The interval 97–128 (RSEGFMTRDPRSVERKKPGQPKARRRFQFSKR) is disordered. A compositionally biased stretch (basic residues) spans 114–128 (PGQPKARRRFQFSKR).

It belongs to the universal ribosomal protein uS9 family.

The chain is Small ribosomal subunit protein uS9 from Bacteroides fragilis (strain ATCC 25285 / DSM 2151 / CCUG 4856 / JCM 11019 / LMG 10263 / NCTC 9343 / Onslow / VPI 2553 / EN-2).